The primary structure comprises 202 residues: Imidazoleglycerol-phosphate dehydratase (202 aa).

Belongs to the imidazoleglycerol-phosphate dehydratase family.

The protein resides in the cytoplasm. The catalysed reaction is D-erythro-1-(imidazol-4-yl)glycerol 3-phosphate = 3-(imidazol-4-yl)-2-oxopropyl phosphate + H2O. The protein operates within amino-acid biosynthesis; L-histidine biosynthesis; L-histidine from 5-phospho-alpha-D-ribose 1-diphosphate: step 6/9. The chain is Imidazoleglycerol-phosphate dehydratase from Sinorhizobium fredii (strain NBRC 101917 / NGR234).